The primary structure comprises 511 residues: Myrosinase 4 (511 aa).

Residues 1-23 (MAIPKAHYSLAVLVLLFVVVSSS) form the signal peptide. 3 disulfides stabilise this stretch: cysteine 31-cysteine 450, cysteine 39-cysteine 445, and cysteine 230-cysteine 233. N-linked (GlcNAc...) asparagine glycosylation is found at asparagine 46 and asparagine 53. Residues glutamine 64, histidine 165, and 210 to 211 (NQ) contribute to the a beta-D-glucoside site. Positions 351 and 418 each coordinate a beta-D-glucoside. Residue glutamate 418 is the Nucleophile of the active site. Asparagine 428 is a glycosylation site (N-linked (GlcNAc...) asparagine). A beta-D-glucoside contacts are provided by residues tryptophan 467, 474 to 475 (EF), and phenylalanine 483. Asparagine 489 carries an N-linked (GlcNAc...) asparagine glycan.

Belongs to the glycosyl hydrolase 1 family. In terms of tissue distribution, specifically expressed in roots.

It catalyses the reaction a thioglucoside + H2O = a sugar + a thiol.. The catalysed reaction is Hydrolysis of terminal, non-reducing beta-D-glucosyl residues with release of beta-D-glucose.. In terms of biological role, hydrolyzes sinigrin and, with lower efficiency, p-nitrophenyl beta-D-glucoside. The sequence is that of Myrosinase 4 from Arabidopsis thaliana (Mouse-ear cress).